Reading from the N-terminus, the 4538-residue chain is Polyketide synthase PksL (4538 aa).

An N-terminal hotdog fold 1 region spans residues 1-123; sequence MRWRSNVKKI…ADMHADSPAI (123 aa). The region spanning 1 to 285 is the PKS/mFAS DH 1 domain; it reads MRWRSNVKKI…SKLVREAELI (285 aa). Catalysis depends on H26, which acts as the Proton acceptor; for dehydratase activity 1. The C-terminal hotdog fold 1 stretch occupies residues 138 to 285; that stretch reads QNVVQLDDVY…SKLVREAELI (148 aa). Residue D199 is the Proton donor; for dehydratase activity 1 of the active site. The disordered stretch occupies residues 289-314; sequence HQDAQETQMTRADTAERDKPADMVSS. A Carrier 1 domain is found at 320–394; it reads SEAEQFVSQL…ELSAFLAEEY (75 aa). S354 bears the O-(pantetheine 4'-phosphoryl)serine mark. The 439-residue stretch at 433–871 folds into the Ketosynthase family 3 (KS3) 1 domain; it reads AGDIAIIGLA…GSNAHIILEE (439 aa). Catalysis depends on for beta-ketoacyl synthase 1 activity residues C609, H744, and H784. Residues 1048–1226 form a dehydratase region; it reads HILHPLLHQN…DSLYAGENGV (179 aa). The tract at residues 1051-1175 is N-terminal hotdog fold 2; sequence HPLLHQNVSD…GSAVLCEAGE (125 aa). The PKS/mFAS DH 2 domain occupies 1051–1340; that stretch reads HPLLHQNVSD…ARVLETDQEG (290 aa). Residue H1080 is the Proton acceptor; for dehydratase activity 2 of the active site. A C-terminal hotdog fold 2 region spans residues 1189–1340; sequence NGRTLSPFDC…ARVLETDQEG (152 aa). The active-site Proton donor; for dehydratase activity 2 is the D1251. Residues 1520 to 1713 form a beta-ketoacyl reductase 1 region; it reads KGVYLITGGA…WKDGGMQIDA (194 aa). Residues 1800–1873 enclose the Carrier 2 domain; the sequence is EKAENYFKQV…SLTRYFIDSR (74 aa). S1834 bears the O-(pantetheine 4'-phosphoryl)serine mark. One can recognise a Ketosynthase family 3 (KS3) 2 domain in the interval 1926-2365; it reads TEEIAIIGIS…GVNAHILIEE (440 aa). Active-site for beta-ketoacyl synthase 2 activity residues include C2103, H2238, and H2278. The segment at 2546 to 2568 is disordered; sequence TEEPFAPVQPVIPKPSVDREASG. 2 Carrier domains span residues 2597–2674 and 2738–2815; these read ITAE…AHEL and VAIE…KSEL. An O-(pantetheine 4'-phosphoryl)serine mark is found at S2634 and S2775. Positions 2828 to 2854 are disordered; that stretch reads SFEAAQQKPAASSHPKPAERPLQPVQH. Residues 2873-3294 enclose the Ketosynthase family 3 (KS3) 3 domain; the sequence is EDAIAIVGMS…GTNAHIVIEE (422 aa). Catalysis depends on for beta-ketoacyl synthase 3 activity residues C3040, H3175, and H3215. The segment at 3686–3887 is beta-ketoacyl reductase 2; the sequence is DKVLLITGGT…PNWKETGLGE (202 aa). Positions 3960-4037 constitute a Carrier 5 domain; sequence NLFPETVDWL…SFAHWLISKY (78 aa). S3997 carries the post-translational modification O-(pantetheine 4'-phosphoryl)serine. The Ketosynthase family 3 (KS3) 4 domain maps to 4082-4485; that stretch reads AEDIAIIGLS…GTNAHLIIEG (404 aa). The active-site For beta-ketoacyl synthase 4 activity is C4237.

Requires pantetheine 4'-phosphate as cofactor.

The protein localises to the cytoplasm. Its pathway is antibiotic biosynthesis; bacillaene biosynthesis. Its function is as follows. Involved in some intermediate steps for the synthesis of the antibiotic polyketide bacillaene which is involved in secondary metabolism. The polypeptide is Polyketide synthase PksL (pksL) (Bacillus subtilis (strain 168)).